A 70-amino-acid chain; its full sequence is Acyl carrier protein (70 aa).

The 69-residue stretch at 2–70 (SDIADRVKKI…ETIQTFGDAP (69 aa)) folds into the Carrier domain. S37 carries the O-(pantetheine 4'-phosphoryl)serine modification.

The protein belongs to the acyl carrier protein (ACP) family. Post-translationally, 4'-phosphopantetheine is transferred from CoA to a specific serine of apo-ACP by AcpS. This modification is essential for activity because fatty acids are bound in thioester linkage to the sulfhydryl of the prosthetic group.

Its subcellular location is the cytoplasm. Its pathway is lipid metabolism; fatty acid biosynthesis. In terms of biological role, carrier of the growing fatty acid chain in fatty acid biosynthesis. This is Acyl carrier protein from Cereibacter sphaeroides (Rhodobacter sphaeroides).